The sequence spans 327 residues: GTP 3',8-cyclase (327 aa).

The region spanning 7 to 232 (HHDRQFRYLR…IKRDRTAGPA (226 aa)) is the Radical SAM core domain. GTP is bound at residue arginine 16. 2 residues coordinate [4Fe-4S] cluster: cysteine 23 and cysteine 27. Residue tyrosine 29 participates in S-adenosyl-L-methionine binding. Cysteine 30 lines the [4Fe-4S] cluster pocket. Arginine 66 is a GTP binding site. Glycine 70 is an S-adenosyl-L-methionine binding site. Threonine 97 contributes to the GTP binding site. Serine 121 contributes to the S-adenosyl-L-methionine binding site. Lysine 158 is a GTP binding site. Methionine 192 contacts S-adenosyl-L-methionine. 2 residues coordinate [4Fe-4S] cluster: cysteine 255 and cysteine 258. 260–262 (RLR) is a GTP binding site. Residue cysteine 272 participates in [4Fe-4S] cluster binding.

The protein belongs to the radical SAM superfamily. MoaA family. As to quaternary structure, monomer and homodimer. Requires [4Fe-4S] cluster as cofactor.

It carries out the reaction GTP + AH2 + S-adenosyl-L-methionine = (8S)-3',8-cyclo-7,8-dihydroguanosine 5'-triphosphate + 5'-deoxyadenosine + L-methionine + A + H(+). It participates in cofactor biosynthesis; molybdopterin biosynthesis. Catalyzes the cyclization of GTP to (8S)-3',8-cyclo-7,8-dihydroguanosine 5'-triphosphate. This is GTP 3',8-cyclase from Synechococcus elongatus (strain ATCC 33912 / PCC 7942 / FACHB-805) (Anacystis nidulans R2).